Consider the following 147-residue polypeptide: Protein archease (147 aa).

Asp17, Asp146, and Val147 together coordinate Ca(2+).

This sequence belongs to the archease family.

In terms of biological role, activates the tRNA-splicing ligase complex by facilitating the enzymatic turnover of catalytic subunit RtcB. Acts by promoting the guanylylation of RtcB, a key intermediate step in tRNA ligation. Can also alter the NTP specificity of RtcB such that ATP, dGTP or ITP is used efficiently. This Pyrobaculum islandicum (strain DSM 4184 / JCM 9189 / GEO3) protein is Protein archease.